Consider the following 668-residue polypeptide: DNA ligase (668 aa).

Residues 35–39, 84–85, and Glu-115 each bind NAD(+); these read DQEYD and SL. Lys-117 functions as the N6-AMP-lysine intermediate in the catalytic mechanism. Arg-138, Glu-172, Lys-288, and Lys-312 together coordinate NAD(+). Residues Cys-406, Cys-409, Cys-425, and Cys-430 each contribute to the Zn(2+) site. In terms of domain architecture, BRCT spans 589-668; it reads KLEGPLKGLV…EEFFDKYGES (80 aa).

It belongs to the NAD-dependent DNA ligase family. LigA subfamily. Requires Mg(2+) as cofactor. Mn(2+) is required as a cofactor.

It carries out the reaction NAD(+) + (deoxyribonucleotide)n-3'-hydroxyl + 5'-phospho-(deoxyribonucleotide)m = (deoxyribonucleotide)n+m + AMP + beta-nicotinamide D-nucleotide.. In terms of biological role, DNA ligase that catalyzes the formation of phosphodiester linkages between 5'-phosphoryl and 3'-hydroxyl groups in double-stranded DNA using NAD as a coenzyme and as the energy source for the reaction. It is essential for DNA replication and repair of damaged DNA. In Petrotoga mobilis (strain DSM 10674 / SJ95), this protein is DNA ligase.